We begin with the raw amino-acid sequence, 345 residues long: UDP-3-O-acylglucosamine N-acyltransferase (345 aa).

The Proton acceptor role is filled by His-252.

Belongs to the transferase hexapeptide repeat family. LpxD subfamily. As to quaternary structure, homotrimer.

The catalysed reaction is a UDP-3-O-[(3R)-3-hydroxyacyl]-alpha-D-glucosamine + a (3R)-hydroxyacyl-[ACP] = a UDP-2-N,3-O-bis[(3R)-3-hydroxyacyl]-alpha-D-glucosamine + holo-[ACP] + H(+). The protein operates within bacterial outer membrane biogenesis; LPS lipid A biosynthesis. Its function is as follows. Catalyzes the N-acylation of UDP-3-O-acylglucosamine using 3-hydroxyacyl-ACP as the acyl donor. Is involved in the biosynthesis of lipid A, a phosphorylated glycolipid that anchors the lipopolysaccharide to the outer membrane of the cell. The chain is UDP-3-O-acylglucosamine N-acyltransferase from Rickettsia rickettsii.